The sequence spans 393 residues: MDLLAPLSAVVLTYREVSAEALGKVGQEMKRCIERRARAFPMYVLHTCSRVEAYLYGAPPEEVQEVAEAYRRYVDSVRVITGAEAARHLFRVAAGLDSILIGETDVLGQVEEAFDRQVRAGYTRGLLKTVVERAVRVGKRVRTETAISRGPRGLGSLSIIYVSRLLDLRQAKAAVLGAGAVGSGLAMELASRGVGKLYILNRTFEKAREVAAKTGGEARPLTREEVERCLRECDVVFSSVHSMEYVIDRVPEGASVKIVVDLGVPQTVAPGLPVKVVRIEDLRQVAEQYNAERAAEVAKAEAIVEEELAALPRLLARRYVEETVAALLETAMTAAEEEGARAGCDAAALAAKTTVKRVLLPLVEKMKKMAEDGQMEEAVRLANVLTQAVGRKT.

Residues 47–50 (TCSR), Ser-98, 103–105 (ETD), and Gln-109 each bind substrate. Cys-48 acts as the Nucleophile in catalysis. 177–182 (GAGAVG) is an NADP(+) binding site.

The protein belongs to the glutamyl-tRNA reductase family. In terms of assembly, homodimer.

The catalysed reaction is (S)-4-amino-5-oxopentanoate + tRNA(Glu) + NADP(+) = L-glutamyl-tRNA(Glu) + NADPH + H(+). Its pathway is porphyrin-containing compound metabolism; protoporphyrin-IX biosynthesis; 5-aminolevulinate from L-glutamyl-tRNA(Glu): step 1/2. Its function is as follows. Catalyzes the NADPH-dependent reduction of glutamyl-tRNA(Glu) to glutamate 1-semialdehyde (GSA). The chain is Glutamyl-tRNA reductase from Pyrobaculum neutrophilum (strain DSM 2338 / JCM 9278 / NBRC 100436 / V24Sta) (Thermoproteus neutrophilus).